The following is a 199-amino-acid chain: Glycerol-3-phosphate acyltransferase (199 aa).

The next 5 helical transmembrane spans lie at 4 to 24, 56 to 76, 80 to 100, 115 to 135, and 154 to 176; these read FALF…AILI, LAVL…GYYL, QFEL…PIFF, IAPI…FVFL, and YVWW…LIYR.

Belongs to the PlsY family. As to quaternary structure, probably interacts with PlsX.

It is found in the cell inner membrane. The catalysed reaction is an acyl phosphate + sn-glycerol 3-phosphate = a 1-acyl-sn-glycero-3-phosphate + phosphate. The protein operates within lipid metabolism; phospholipid metabolism. Its function is as follows. Catalyzes the transfer of an acyl group from acyl-phosphate (acyl-PO(4)) to glycerol-3-phosphate (G3P) to form lysophosphatidic acid (LPA). This enzyme utilizes acyl-phosphate as fatty acyl donor, but not acyl-CoA or acyl-ACP. The chain is Glycerol-3-phosphate acyltransferase from Haemophilus influenzae (strain PittGG).